Here is a 578-residue protein sequence, read N- to C-terminus: Ribonuclease SLFN12 (578 aa).

A Phosphoserine modification is found at Ser-368. Positions 551 to 560 (AENLYQIIGI) are mediates interaction with PDE3A. Phosphoserine is present on Ser-573.

It belongs to the Schlafen family. Subgroup II subfamily. In terms of assembly, homodimer. Interacts with PDE3A; direct low affinity interaction which is stimulated by binding of 17beta-estradiol/E2 to PDE3A and that positively regulates the ribonuclease activity of SLFN12. Interacts with SERPINB12; as part of a pathway regulating cell differentiation. Phosphorylation at Ser-368 and Ser-573 negatively regulates the ribonuclease activity. Dephosphorylation is induced by the interaction with PDE3A and stimulates the rRNA ribonuclease activity.

The protein resides in the nucleus. It is found in the cytoplasm. The protein localises to the cytosol. In terms of biological role, ribonuclease which is part of an E2/17beta-estradiol-induced pro-apoptotic signaling pathway. E2 stabilizes the PDE3A/SLFN12 complex in the cytosol, promoting the dephosphorylation of SLFN12 and activating its pro-apoptotic ribosomal RNA/rRNA ribonuclease activity. This apoptotic pathway might be relevant in tissues with high concentration of E2 and be for instance involved in placenta remodeling. May play a role in cell differentiation. This Homo sapiens (Human) protein is Ribonuclease SLFN12.